The chain runs to 697 residues: Zinc finger and BTB domain-containing protein 24 (697 aa).

Residues 10–133 (GQLVVHSDAH…AYTDFQNNHS (124 aa)) enclose the BTB domain. Residues 131 to 142 (NHSSPKPTTLNT) are compositionally biased toward polar residues. Disordered regions lie at residues 131–176 (NHSS…EEKS) and 209–254 (EQIA…SRYS). Residues 159–171 (KRKRGRPKKVNTL) constitute a DNA-binding region (a.T hook). The span at 212–245 (AAKEKEESEPTCEPSREEEMPVEKDENYDPKTED) shows a compositional bias: basic and acidic residues. 8 C2H2-type zinc fingers span residues 294-316 (ARCK…QRSH), 322-344 (FKCN…TRMH), 350-372 (YTCT…MSLH), 378-400 (FTCD…YRVH), 406-428 (PECK…LRTH), 434-456 (FTCE…IRIH), 462-484 (YSCG…CILH), and 490-512 (FSCP…LKIH). Positions 652 to 697 (QEQTEELHLATSTSDPAQHLQLTQEPGPPPPTHHVPQPTPLGQEQS) are disordered. A compositionally biased stretch (pro residues) spans 677-690 (PGPPPPTHHVPQPT).

The protein belongs to the krueppel C2H2-type zinc-finger protein family. In terms of assembly, interacts with MN1. In terms of tissue distribution, widely expressed, with highest levels in naive B-cells.

It localises to the nucleus. Its function is as follows. May be involved in BMP2-induced transcription. This is Zinc finger and BTB domain-containing protein 24 (ZBTB24) from Homo sapiens (Human).